Here is a 228-residue protein sequence, read N- to C-terminus: Eukaryotic translation initiation factor 4E-1 (228 aa).

EIF4G-binding stretches follow at residues 53–56 and 63–99; these read HLLE and FDTP…NNIH. Residues 71–76, Lys103, and 121–122 contribute to the mRNA site; these read KQDDWG and WE. A disulfide bridge links Cys126 with Cys164. Positions 147-156 are EIF4G-binding; the sequence is YTLLAMIGEQ. MRNA-binding positions include 171 to 176 and 216 to 220; these read RGRAEK and RKLDR.

This sequence belongs to the eukaryotic initiation factor 4E family. EIF4F is a multi-subunit complex, the composition of which varies with external and internal environmental conditions. It is composed of at least EIF4A, EIF4E and EIF4G. EIF4E is also known to interact with other partners. In higher plants two isoforms of EIF4F have been identified, named isoform EIF4F and isoform EIF(iso)4F. Isoform EIF4F has subunits p220 and p26, whereas isoform EIF(iso)4F has subunits p82 and p28. In terms of assembly, (Microbial infection) Interacts with potyvirus viral genome-linked protein (VPg); this interaction is possible in susceptible hosts but impaired in resistant plants. In terms of processing, according to the redox status, the Cys-126-Cys-164 disulfide bridge may have a role in regulating protein function by affecting its ability to bind capped mRNA.

The protein resides in the nucleus. It is found in the cytoplasm. Functionally, component of the protein complex eIF4F, which is involved in the recognition of the mRNA cap, ATP-dependent unwinding of 5'-terminal secondary structure and recruitment of mRNA to the ribosome. Recognizes and binds the 7-methylguanosine-containing mRNA cap during an early step in the initiation of protein synthesis and facilitates ribosome binding by inducing the unwinding of the mRNAs secondary structures. Key component of recessive resistance to potyviruses. In terms of biological role, (Microbial infection) Susceptibility host factor required for viral infection by recruiting viral RNAs to the host ribosomal complex via an interaction with viral genome-linked protein (VPg). Also seems to be involved in virus movement from cell-to-cell. The sequence is that of Eukaryotic translation initiation factor 4E-1 from Pisum sativum (Garden pea).